The chain runs to 102 residues: MEITKDTIKHVATLSRLAFNEEELDKFTDQMGSIINMADQLSEVDTEGVEETVQVVDRDTVFREDIPEHWQGQTRETLMENVPEKANGYIKVPVIINKDEDE.

It belongs to the GatC family. In terms of assembly, heterotrimer of A, B and C subunits.

The catalysed reaction is L-glutamyl-tRNA(Gln) + L-glutamine + ATP + H2O = L-glutaminyl-tRNA(Gln) + L-glutamate + ADP + phosphate + H(+). It carries out the reaction L-aspartyl-tRNA(Asn) + L-glutamine + ATP + H2O = L-asparaginyl-tRNA(Asn) + L-glutamate + ADP + phosphate + 2 H(+). Allows the formation of correctly charged Asn-tRNA(Asn) or Gln-tRNA(Gln) through the transamidation of misacylated Asp-tRNA(Asn) or Glu-tRNA(Gln) in organisms which lack either or both of asparaginyl-tRNA or glutaminyl-tRNA synthetases. The reaction takes place in the presence of glutamine and ATP through an activated phospho-Asp-tRNA(Asn) or phospho-Glu-tRNA(Gln). The sequence is that of Aspartyl/glutamyl-tRNA(Asn/Gln) amidotransferase subunit C from Lactobacillus acidophilus (strain ATCC 700396 / NCK56 / N2 / NCFM).